Reading from the N-terminus, the 158-residue chain is 2-C-methyl-D-erythritol 2,4-cyclodiphosphate synthase (158 aa).

A divalent metal cation contacts are provided by Asp-9 and His-11. 4-CDP-2-C-methyl-D-erythritol 2-phosphate contacts are provided by residues Asp-9–His-11 and His-35–Ser-36. His-43 contacts a divalent metal cation. 4-CDP-2-C-methyl-D-erythritol 2-phosphate-binding positions include Asp-57–Gly-59, Phe-62–Asp-66, Thr-133–Glu-136, Phe-140, and Arg-143.

This sequence belongs to the IspF family. Homotrimer. A divalent metal cation serves as cofactor.

It catalyses the reaction 4-CDP-2-C-methyl-D-erythritol 2-phosphate = 2-C-methyl-D-erythritol 2,4-cyclic diphosphate + CMP. Its pathway is isoprenoid biosynthesis; isopentenyl diphosphate biosynthesis via DXP pathway; isopentenyl diphosphate from 1-deoxy-D-xylulose 5-phosphate: step 4/6. In terms of biological role, involved in the biosynthesis of isopentenyl diphosphate (IPP) and dimethylallyl diphosphate (DMAPP), two major building blocks of isoprenoid compounds. Catalyzes the conversion of 4-diphosphocytidyl-2-C-methyl-D-erythritol 2-phosphate (CDP-ME2P) to 2-C-methyl-D-erythritol 2,4-cyclodiphosphate (ME-CPP) with a corresponding release of cytidine 5-monophosphate (CMP). This chain is 2-C-methyl-D-erythritol 2,4-cyclodiphosphate synthase, found in Haemophilus influenzae (strain 86-028NP).